A 264-amino-acid polypeptide reads, in one-letter code: Secretory carrier-associated membrane protein 4 (264 aa).

The interval 1–33 (MNRHHDPNPFDEDEEIVNPFSKGGGRVPAASRP) is disordered. Residues 1–122 (MNRHHDPNPF…AQKLQYLAFA (122 aa)) lie on the Cytoplasmic side of the membrane. The stretch at 51–85 (MNDSSQKQRKLADWEAELRKKEMDIKRREEAIAKF) forms a coiled coil. Helical transmembrane passes span 123 to 143 (SWLGIVLCLVFNVIATMVCWI), 150 to 170 (IFFLATIYALIGCPLSYVLWY), 185 to 205 (FGWFFFTYLIHIGFCIVAAIA), and 233 to 253 (IFYFIGFGLFCLESLLSLWVL). Residues 254–264 (QKIYLYFRGNK) lie on the Cytoplasmic side of the membrane.

It belongs to the SCAMP family.

It is found in the cell membrane. Its subcellular location is the cytoplasmic vesicle. The protein resides in the secretory vesicle membrane. In terms of biological role, probably involved in membrane trafficking. This chain is Secretory carrier-associated membrane protein 4 (SCAMP4), found in Arabidopsis thaliana (Mouse-ear cress).